We begin with the raw amino-acid sequence, 1112 residues long: Plasma membrane calcium-transporting ATPase 2 (1112 aa).

The Cytoplasmic segment spans residues 1–94; it reads MGDMSNSDFY…NLIPPKKPKT (94 aa). A helical membrane pass occupies residues 95-115; sequence FLQLVWEALQDVTLIILEIAA. Residues 116–152 lie on the Extracellular side of the membrane; the sequence is LISLGLSFYHPPGETGGESCGAAAGGVEDEGEADAGW. The helical transmembrane segment at 153-173 threads the bilayer; that stretch reads IEGAAILLSVVCVVLVTAFND. Residues 174-373 lie on the Cytoplasmic side of the membrane; the sequence is WSKEKQFRGL…KEKSVLQGKL (200 aa). Residues 298-311 are compositionally biased toward basic and acidic residues; it reads EKKEKKGGAVEDGH. The segment at 298-363 is disordered; it reads EKKEKKGGAV…KERKKVSAPK (66 aa). Polar residues predominate over residues 312–327; the sequence is QNTGKMQDGNMESNQI. A compositionally biased stretch (basic and acidic residues) spans 351–363; the sequence is ADEKERKKVSAPK. The helical transmembrane segment at 374–393 threads the bilayer; it reads TKLAVQIGKAGLLMSAITVI. Residues 394 to 426 lie on the Extracellular side of the membrane; sequence ILVLYFAIDNFVMQKRPWMPECTPIYIQYFVKF. Residues 427 to 444 form a helical membrane-spanning segment; sequence FIIGVTVLVVAVPEGLPL. The Cytoplasmic segment spans residues 445-858; that stretch reads AVTISLAYSV…MWGRNVYDSI (414 aa). Residue Asp482 is the 4-aspartylphosphate intermediate of the active site. Positions 803 and 807 each coordinate Mg(2+). Residues 859–878 traverse the membrane as a helical segment; that stretch reads SKFLQFQLTVNVVAVIVAFT. At 879–888 the chain is on the extracellular side; sequence GACITQDSPL. The chain crosses the membrane as a helical span at residues 889 to 909; it reads KAVQMLWVNLIMDTFASLALA. At 910–929 the chain is on the cytoplasmic side; sequence TEPPTESLLKRKPYGRNKPL. A helical membrane pass occupies residues 930 to 952; it reads ISSTMTKNILGHGVYQLIIIFTL. The Extracellular segment spans residues 953 to 970; sequence LFVGEQIFDIDSGRNAPL. The chain crosses the membrane as a helical span at residues 971-992; it reads HSPPSEHYTIIFNTFVMMQLFN. Residues 993–1011 lie on the Cytoplasmic side of the membrane; sequence EINARKIHGERNVFDGIFR. The chain crosses the membrane as a helical span at residues 1012–1033; that stretch reads NPIFCSIVFGTFAVQIVIVQFG. The Extracellular portion of the chain corresponds to 1034-1043; it reads GKPFSCQPLD. Residues 1044-1065 form a helical membrane-spanning segment; the sequence is LEKWMWCVFLGLGELVWGQVIA. At 1066 to 1112 the chain is on the cytoplasmic side; sequence TIPNSRLRFLRRAGQLTQKDELPEEDVNEENEEIDHAERELRRGQIL. Positions 1086 to 1112 are disordered; it reads ELPEEDVNEENEEIDHAERELRRGQIL. Over residues 1087 to 1098 the composition is skewed to acidic residues; that stretch reads LPEEDVNEENEE. Residues 1099 to 1112 are compositionally biased toward basic and acidic residues; it reads IDHAERELRRGQIL. The calmodulin-binding subdomain A stretch occupies residues 1106–1112; that stretch reads LRRGQIL.

It belongs to the cation transport ATPase (P-type) (TC 3.A.3) family. Type IIB subfamily.

The protein resides in the cell membrane. The catalysed reaction is Ca(2+)(in) + ATP + H2O = Ca(2+)(out) + ADP + phosphate + H(+). In terms of biological role, this magnesium-dependent enzyme catalyzes the hydrolysis of ATP coupled with the transport of calcium out of the cell. This Oreochromis mossambicus (Mozambique tilapia) protein is Plasma membrane calcium-transporting ATPase 2 (atp2b2).